A 380-amino-acid chain; its full sequence is Cytochrome b (380 aa).

4 helical membrane passes run 34–54, 78–99, 114–134, and 179–199; these read FGSL…LLAT, WLIR…YLHI, WNTG…GYVL, and FFAL…IHLA. Heme b-binding residues include histidine 84 and histidine 98. Histidine 183 and histidine 197 together coordinate heme b. An a ubiquinone-binding site is contributed by histidine 202. Transmembrane regions (helical) follow at residues 227–247, 289–309, 321–341, and 348–368; these read LKDI…ALFS, LGGV…PFLH, LSQI…WIGS, and FIII…ILFP.

The protein belongs to the cytochrome b family. The cytochrome bc1 complex contains 11 subunits: 3 respiratory subunits (MT-CYB, CYC1 and UQCRFS1), 2 core proteins (UQCRC1 and UQCRC2) and 6 low-molecular weight proteins (UQCRH/QCR6, UQCRB/QCR7, UQCRQ/QCR8, UQCR10/QCR9, UQCR11/QCR10 and a cleavage product of UQCRFS1). This cytochrome bc1 complex then forms a dimer. Heme b is required as a cofactor.

The protein localises to the mitochondrion inner membrane. Component of the ubiquinol-cytochrome c reductase complex (complex III or cytochrome b-c1 complex) that is part of the mitochondrial respiratory chain. The b-c1 complex mediates electron transfer from ubiquinol to cytochrome c. Contributes to the generation of a proton gradient across the mitochondrial membrane that is then used for ATP synthesis. The chain is Cytochrome b (MT-CYB) from Callipepla gambelii (Gambel's quail).